Here is a 261-residue protein sequence, read N- to C-terminus: Basic leucine zipper 19 (261 aa).

Disordered stretches follow at residues 1–22 and 74–100; these read MEDGELDFSNQEVFSSSEMGEL and ESDEKVSTDDTAESCGKKGEKRPLGNR. A compositionally biased stretch (polar residues) spans 8–18; it reads FSNQEVFSSSE. Over residues 88–100 the composition is skewed to basic and acidic residues; sequence CGKKGEKRPLGNR. The bZIP domain maps to 89–155; sequence GKKGEKRPLG…SRLKCLLVDL (67 aa). The tract at residues 90–113 is basic motif; it reads KKGEKRPLGNREAVRKYREKKKAK. The leucine-zipper stretch occupies residues 117 to 131; that stretch reads LEDEVARLRAVNQQL. Over residues 237 to 248 the composition is skewed to low complexity; sequence NGSFSNVNTSVS. Positions 237 to 261 are disordered; the sequence is NGSFSNVNTSVSNKRKGGHRASRAV. The segment covering 249–261 has biased composition (basic residues); it reads NKRKGGHRASRAV.

The protein resides in the nucleus. Its function is as follows. Transcription factor involved in the response to zinc ion deficiency. Binds to the consensus sequence 5'-[AG]TGTCGACA[CT]-3' also called zinc deficiency response element (ZDRE). The ZDRE sequence is conserved in the plant kingdom and present in the promoters of genes that constitute the primary response to zinc deficiency, comprising additional ZIP metal transporter genes. Required for zinc accumulation in roots. Mediates the expression of the zinc transporters ZIP3, ZIP4, ZIP5 and ZIP9 during growth in zinc-deficient conditions. ZIP9 transporter is involved in zinc uptake in roots. This is Basic leucine zipper 19 from Arabidopsis thaliana (Mouse-ear cress).